The following is a 344-amino-acid chain: tRNA N6-adenosine threonylcarbamoyltransferase (344 aa).

Fe cation is bound by residues His111 and His115. Substrate contacts are provided by residues 134–138 (LVSGG), Asp167, Gly180, and Asn272. Position 300 (Asp300) interacts with Fe cation.

Belongs to the KAE1 / TsaD family. Fe(2+) is required as a cofactor.

Its subcellular location is the cytoplasm. It catalyses the reaction L-threonylcarbamoyladenylate + adenosine(37) in tRNA = N(6)-L-threonylcarbamoyladenosine(37) in tRNA + AMP + H(+). Functionally, required for the formation of a threonylcarbamoyl group on adenosine at position 37 (t(6)A37) in tRNAs that read codons beginning with adenine. Is involved in the transfer of the threonylcarbamoyl moiety of threonylcarbamoyl-AMP (TC-AMP) to the N6 group of A37, together with TsaE and TsaB. TsaD likely plays a direct catalytic role in this reaction. In Idiomarina loihiensis (strain ATCC BAA-735 / DSM 15497 / L2-TR), this protein is tRNA N6-adenosine threonylcarbamoyltransferase.